A 155-amino-acid polypeptide reads, in one-letter code: Glutaredoxin-related protein 5, mitochondrial (155 aa).

The N-terminal 14 residues, 1–14 (MNSVFRSTARCLRS), are a transit peptide targeting the mitochondrion. The Glutaredoxin domain maps to 42–145 (QKNLEEMVKK…EELQKLGIRS (104 aa)). Residue Lys-59 participates in glutathione binding. A [2Fe-2S] cluster-binding site is contributed by Cys-67. Glutathione is bound by residues 97–101 (RQGIK), Ile-109, and 122–123 (CD).

As to quaternary structure, homodimer.

It is found in the mitochondrion. Its function is as follows. Monothiol glutaredoxin involved in mitochondrial iron-sulfur (Fe/S) cluster transfer. Receives iron-sulfur clusters from scaffold protein ISCU and mediates their transfer to apoproteins, to the 4Fe/FS cluster biosynthesis machinery, or export from mitochondrion. Required for normal hemoglobin biosynthesis. In Danio rerio (Zebrafish), this protein is Glutaredoxin-related protein 5, mitochondrial (glrx5).